A 429-amino-acid polypeptide reads, in one-letter code: C4-dicarboxylate transport protein (429 aa).

8 helical membrane passes run 3–23 (VSIF…GVLL), 44–64 (LIKM…IAGM), 76–96 (IALL…LVVV), 144–164 (AFAS…GFAL), 184–204 (VIFG…FGAM), 222–242 (LILC…GTIA), 331–351 (TLLV…GSGF), and 352–372 (IVLA…LALI).

Belongs to the dicarboxylate/amino acid:cation symporter (DAACS) (TC 2.A.23) family.

The protein localises to the cell inner membrane. Responsible for the transport of dicarboxylates such as succinate, fumarate, and malate from the periplasm across the membrane. This Yersinia pseudotuberculosis serotype O:1b (strain IP 31758) protein is C4-dicarboxylate transport protein.